The following is a 100-amino-acid chain: Large ribosomal subunit protein uL23 (100 aa).

It belongs to the universal ribosomal protein uL23 family. As to quaternary structure, part of the 50S ribosomal subunit. Contacts protein L29, and trigger factor when it is bound to the ribosome.

In terms of biological role, one of the early assembly proteins it binds 23S rRNA. One of the proteins that surrounds the polypeptide exit tunnel on the outside of the ribosome. Forms the main docking site for trigger factor binding to the ribosome. This Prochlorococcus marinus subsp. pastoris (strain CCMP1986 / NIES-2087 / MED4) protein is Large ribosomal subunit protein uL23.